The chain runs to 320 residues: NAC domain-containing protein 20 (320 aa).

Residues 14–170 (LPPGFRFHPT…DWAVCRIFHK (157 aa)) form the NAC domain. A DNA-binding region spans residues 114–176 (IGMKKTLVFY…IFHKSSGIKK (63 aa)).

Forms homodimers. Forms heterodimers with NAC26. As to expression, expressed in developing seeds. Expressed in developing endosperm.

It localises to the nucleus. The protein localises to the endoplasmic reticulum. Its function is as follows. Transcription factor that acts redundantly with NAC26 to regulate the expression of genes involved in the biosynthesis of starch and storage proteins in grain. Directly binds to the promoters of starch synthase 1 (SS1), pullulanase (PUL), glutelin A1 (GLUA1), glutelins B4 and B5 (GLUB4 and GLUB5), alpha-globulin and 16 kDa prolamin, and activates their expression. The chain is NAC domain-containing protein 20 from Oryza sativa subsp. japonica (Rice).